A 156-amino-acid polypeptide reads, in one-letter code: Large ribosomal subunit protein uL15 (156 aa).

A compositionally biased stretch (basic and acidic residues) spans 1–11; that stretch reads MKLNDLRDKPG. Positions 1 to 44 are disordered; that stretch reads MKLNDLRDKPGSVKARKRVGRGIGSGTGKTGGRGVKGQKSRSGV. The span at 21-35 shows a compositional bias: gly residues; sequence RGIGSGTGKTGGRGV.

This sequence belongs to the universal ribosomal protein uL15 family. In terms of assembly, part of the 50S ribosomal subunit.

Binds to the 23S rRNA. In Brucella abortus (strain S19), this protein is Large ribosomal subunit protein uL15.